A 317-amino-acid polypeptide reads, in one-letter code: Transcriptional regulator LsrR (317 aa).

The segment at residues 33-56 is a DNA-binding region (H-T-H motif); that stretch reads QSEISDRLGLTRLKVSRLLEKGHQ.

It belongs to the SorC transcriptional regulatory family.

It is found in the cytoplasm. With respect to regulation, inactivated by phosphorylated autoinducer-2 (phospho-AI-2). Phospho-AI-2 acts by binding to LsrR, which is then unable to bind to the promoter regions, allowing the transcription of the target genes. Functionally, transcriptional regulator that represses the expression of the lsr operon in the absence of the quorum-sensing signaling molecule autoinducer 2 (AI-2). It also represses the expression of the lsrRK operon. Acts by binding directly to the lsrA and lsrR promoter regions. In the presence of phosphorylated autoinducer-2 (phospho-AI-2), LsrR is inactivated, leading to the transcription of the genes. This chain is Transcriptional regulator LsrR (lsrR), found in Escherichia coli O139:H28 (strain E24377A / ETEC).